The sequence spans 121 residues: Heme-degrading monooxygenase (121 aa).

Residues 2–101 form the ABM domain; that stretch reads IIVTNTIKVE…EQREDRKGIV (100 aa). A Fe cation-binding site is contributed by N6. The interval 76 to 98 is disordered; that stretch reads KSDSFKKAHGRTKDTREQREDRK. Basic and acidic residues predominate over residues 78–98; the sequence is DSFKKAHGRTKDTREQREDRK. Residue H84 coordinates heme.

It belongs to the antibiotic biosynthesis monooxygenase family. Heme-degrading monooxygenase IsdG subfamily. In terms of assembly, homodimer.

Its subcellular location is the cytoplasm. It catalyses the reaction heme b + 3 reduced [NADPH--hemoprotein reductase] + 3 O2 = biliverdin IXalpha + CO + Fe(2+) + 3 oxidized [NADPH--hemoprotein reductase] + 3 H2O + H(+). Its function is as follows. Allows bacterial pathogens to use the host heme as an iron source. Catalyzes the oxidative degradation of the heme macrocyclic porphyrin ring to the biliverdin in the presence of a suitable electron donor such as ascorbate or NADPH--cytochrome P450 reductase, with subsequent release of free iron. The sequence is that of Heme-degrading monooxygenase from Listeria innocua serovar 6a (strain ATCC BAA-680 / CLIP 11262).